Consider the following 473-residue polypeptide: MNKKLGHKDHFHFIGIGGIGMSAIAMALIKKGYSVSGSDLIQNKETKSLKTLGAIIFDSQIKKNIDFVISKFQDHTLNCVISSAIKDENEELCFCKKNNLSIKHRSEILAMIMNSYTSLSIAGSHGKTSTSTFLSTLLELCTHDSSSITGGIIPIYDSNAHIENTKYLVTEIDESDGTIKNYNSDIGIINNIDFDHCDHYSNIDEVLSSFKKFASNCQKLLINYDCKFTKNNFTSKNQWSIKESNNIAYSLIPNIINKDKTVGKYYEHGKFIDIINIPVPGLHNLSNITAAIAACRMVGVSFKEIKKNTESLKLPKKRFEFRGEINQRIIYDDYAHHPNEIKATIDLARLFIKDKNSSDREEKGRLIAIFQPHRFTRVKQFIHEFVKELSKADVIYVTNIFGAGEKNIDNIDSQLIANLIYKNNKNVTCLKDNYEINEKFFKLTKKNDFIINMGAGDCHNLWSILKNKNTLNN.

Residue 123–129 (GSHGKTS) participates in ATP binding.

It belongs to the MurCDEF family.

The protein localises to the cytoplasm. The catalysed reaction is UDP-N-acetyl-alpha-D-muramate + L-alanine + ATP = UDP-N-acetyl-alpha-D-muramoyl-L-alanine + ADP + phosphate + H(+). It participates in cell wall biogenesis; peptidoglycan biosynthesis. In terms of biological role, cell wall formation. The polypeptide is UDP-N-acetylmuramate--L-alanine ligase (Prochlorococcus marinus subsp. pastoris (strain CCMP1986 / NIES-2087 / MED4)).